The following is a 136-amino-acid chain: General odorant-binding protein 57e (136 aa).

Positions 1 to 20 (MLDQLTLCLLLNFLCANVLA) are cleaved as a signal peptide. 3 disulfide bridges follow: cysteine 28-cysteine 61, cysteine 57-cysteine 109, and cysteine 98-cysteine 118.

Belongs to the PBP/GOBP family.

Functionally, present in the aqueous fluid surrounding olfactory sensory dendrites and are thought to aid in the capture and transport of hydrophobic odorants into and through this fluid. The polypeptide is General odorant-binding protein 57e (Drosophila melanogaster (Fruit fly)).